A 97-amino-acid chain; its full sequence is Defensin-like protein 246 (97 aa).

The signal sequence occupies residues 1–24 (MKFVAIFLVTCVLFSLFPSHLSQG). 4 disulfide bridges follow: C39/C96, C50/C79, C58/C89, and C77/C91.

The protein belongs to the DEFL family. Flower buds and stems.

The protein resides in the secreted. The sequence is that of Defensin-like protein 246 (SCRL5) from Arabidopsis thaliana (Mouse-ear cress).